The sequence spans 236 residues: Phosphoribosylaminoimidazole-succinocarboxamide synthase (236 aa).

The protein belongs to the SAICAR synthetase family.

It carries out the reaction 5-amino-1-(5-phospho-D-ribosyl)imidazole-4-carboxylate + L-aspartate + ATP = (2S)-2-[5-amino-1-(5-phospho-beta-D-ribosyl)imidazole-4-carboxamido]succinate + ADP + phosphate + 2 H(+). Its pathway is purine metabolism; IMP biosynthesis via de novo pathway; 5-amino-1-(5-phospho-D-ribosyl)imidazole-4-carboxamide from 5-amino-1-(5-phospho-D-ribosyl)imidazole-4-carboxylate: step 1/2. The protein is Phosphoribosylaminoimidazole-succinocarboxamide synthase of Rickettsia felis (strain ATCC VR-1525 / URRWXCal2) (Rickettsia azadi).